A 338-amino-acid chain; its full sequence is Lipoate-protein ligase A (338 aa).

Positions 29–216 (PATQRVLFLW…AFFAHYGERV (188 aa)) constitute a BPL/LPL catalytic domain. Residues R71, 76-79 (GAVF), and K134 contribute to the ATP site. Residue K134 coordinates (R)-lipoate.

This sequence belongs to the LplA family. In terms of assembly, monomer.

It is found in the cytoplasm. The catalysed reaction is L-lysyl-[lipoyl-carrier protein] + (R)-lipoate + ATP = N(6)-[(R)-lipoyl]-L-lysyl-[lipoyl-carrier protein] + AMP + diphosphate + H(+). Its pathway is protein modification; protein lipoylation via exogenous pathway; protein N(6)-(lipoyl)lysine from lipoate: step 1/2. The protein operates within protein modification; protein lipoylation via exogenous pathway; protein N(6)-(lipoyl)lysine from lipoate: step 2/2. Functionally, catalyzes both the ATP-dependent activation of exogenously supplied lipoate to lipoyl-AMP and the transfer of the activated lipoyl onto the lipoyl domains of lipoate-dependent enzymes. The polypeptide is Lipoate-protein ligase A (Shigella dysenteriae serotype 1 (strain Sd197)).